An 87-amino-acid chain; its full sequence is A-agglutinin-binding subunit (87 aa).

A signal peptide spans 1-18 (MQLLRCFSIFSVIASVLA). T22 is a glycosylation site (O-linked (Man...) threonine). Residue S30 is glycosylated (O-linked (Man...) serine). A glycan (O-linked (Man...) threonine) is linked at T32. O-linked (Man...) serine glycosylation is present at S39. O-linked (Man...) threonine glycosylation is present at T63. S66 carries O-linked (Man...) serine glycosylation. O-linked (Man...) threonine glycosylation is present at T75.

In terms of assembly, heterodimer; disulfide-linked. Interacts with SAG1.

Receptor binding subunit of the a-agglutinin heterodimer. S.cerevisiae a and alpha cells express the complementary cell surface glycoproteins a-agglutinin and alpha-agglutinin, respectively, which interact with one another to promote cellular aggregation during mating. This Saccharomyces cerevisiae (strain ATCC 204508 / S288c) (Baker's yeast) protein is A-agglutinin-binding subunit (AGA2).